Consider the following 598-residue polypeptide: Elongation factor 4 2 (598 aa).

One can recognise a tr-type G domain in the interval 2–184 (KHIRNFCIIA…GIVKNLPAPK (183 aa)). GTP is bound by residues 14–19 (DHGKST) and 131–134 (NKID).

The protein belongs to the TRAFAC class translation factor GTPase superfamily. Classic translation factor GTPase family. LepA subfamily.

The protein localises to the cell inner membrane. It catalyses the reaction GTP + H2O = GDP + phosphate + H(+). Required for accurate and efficient protein synthesis under certain stress conditions. May act as a fidelity factor of the translation reaction, by catalyzing a one-codon backward translocation of tRNAs on improperly translocated ribosomes. Back-translocation proceeds from a post-translocation (POST) complex to a pre-translocation (PRE) complex, thus giving elongation factor G a second chance to translocate the tRNAs correctly. Binds to ribosomes in a GTP-dependent manner. The sequence is that of Elongation factor 4 2 from Rhodopirellula baltica (strain DSM 10527 / NCIMB 13988 / SH1).